Consider the following 69-residue polypeptide: Cytochrome c oxidase subunit 8A, mitochondrial (69 aa).

A mitochondrion-targeting transit peptide spans 1 to 25 (MSVLTPLLLRSLTGSARRLMVPRAQ). The SIFI-degron motif lies at 2–19 (SVLTPLLLRSLTGSARRL). Topologically, residues 26–36 (VHSKPAREQLG) are mitochondrial matrix. Residues 37–60 (VLDITIGLTSCFVCCLLPAGWVLS) form a helical membrane-spanning segment. At 61 to 69 (HLESYKKRE) the chain is on the mitochondrial intermembrane side.

This sequence belongs to the cytochrome c oxidase VIII family. In terms of assembly, component of the cytochrome c oxidase (complex IV, CIV), a multisubunit enzyme composed of 14 subunits. The complex is composed of a catalytic core of 3 subunits MT-CO1, MT-CO2 and MT-CO3, encoded in the mitochondrial DNA, and 11 supernumerary subunits COX4I, COX5A, COX5B, COX6A, COX6B, COX6C, COX7A, COX7B, COX7C, COX8 and NDUFA4, which are encoded in the nuclear genome. The complex exists as a monomer or a dimer and forms supercomplexes (SCs) in the inner mitochondrial membrane with NADH-ubiquinone oxidoreductase (complex I, CI) and ubiquinol-cytochrome c oxidoreductase (cytochrome b-c1 complex, complex III, CIII), resulting in different assemblies (supercomplex SCI(1)III(2)IV(1) and megacomplex MCI(2)III(2)IV(2)). Post-translationally, in response to mitochondrial stress, the precursor protein is ubiquitinated by the SIFI complex in the cytoplasm before mitochondrial import, leading to its degradation. Within the SIFI complex, UBR4 initiates ubiquitin chain that are further elongated or branched by KCMF1.

Its subcellular location is the mitochondrion inner membrane. Its pathway is energy metabolism; oxidative phosphorylation. Its function is as follows. Component of the cytochrome c oxidase, the last enzyme in the mitochondrial electron transport chain which drives oxidative phosphorylation. The respiratory chain contains 3 multisubunit complexes succinate dehydrogenase (complex II, CII), ubiquinol-cytochrome c oxidoreductase (cytochrome b-c1 complex, complex III, CIII) and cytochrome c oxidase (complex IV, CIV), that cooperate to transfer electrons derived from NADH and succinate to molecular oxygen, creating an electrochemical gradient over the inner membrane that drives transmembrane transport and the ATP synthase. Cytochrome c oxidase is the component of the respiratory chain that catalyzes the reduction of oxygen to water. Electrons originating from reduced cytochrome c in the intermembrane space (IMS) are transferred via the dinuclear copper A center (CU(A)) of subunit 2 and heme A of subunit 1 to the active site in subunit 1, a binuclear center (BNC) formed by heme A3 and copper B (CU(B)). The BNC reduces molecular oxygen to 2 water molecules using 4 electrons from cytochrome c in the IMS and 4 protons from the mitochondrial matrix. This Mus musculus (Mouse) protein is Cytochrome c oxidase subunit 8A, mitochondrial (Cox8a).